A 325-amino-acid chain; its full sequence is Retinal homeobox protein Rx-B (325 aa).

The Octapeptide motif motif lies at 32-39 (HSIEAILG). A compositionally biased stretch (basic and acidic residues) spans 75–87 (TEEIHPQQEHLED). The interval 75 to 136 (TEEIHPQQEH…KKKHRRNRTT (62 aa)) is disordered. The span at 99-117 (AKTSSECLSPGLSTSNSDN) shows a compositional bias: polar residues. The homeobox DNA-binding region spans 130 to 189 (HRRNRTTFTTYQLHELERAFEKSHYPDVYSREELAMKVNLPEVRVQVWFQNRRAKWRRQE). Residues 302–315 (NSIASLRMKAKEHI) carry the OAR motif. Positions 308 to 312 (RMKAK) match the Nuclear localization signal motif.

The protein belongs to the paired homeobox family. Bicoid subfamily. In terms of tissue distribution, highly expressed in anterior neural plate followed by neural retina, pigmented epithelium, in pineal gland, diencephalon floor and epiphysis. At later stages, the neuroretina remains the primary site of expression. No expression in the developing lens and cornea.

It is found in the nucleus. Functionally, plays a critical role in eye formation by regulating the initial specification of retinal cells and/or their subsequent proliferation. The protein is Retinal homeobox protein Rx-B (rax-b) of Xenopus laevis (African clawed frog).